Here is a 62-residue protein sequence, read N- to C-terminus: Pro-MCH variant (62 aa).

The NGE-like stretch occupies residues 23–41; sequence GSVAFPAENGVQDTESTQE. The segment at 28 to 62 is disordered; sequence PAENGVQDTESTQEKRETGDEENSAQFPIGRRDFD. Residues 44 to 56 form an NEI-like region; sequence ETGDEENSAQFPI. Residues 60–62 form a melanin-concentrating hormone-like region; the sequence is DFD.

This sequence belongs to the melanin-concentrating hormone family.

The polypeptide is Pro-MCH variant (PMCHL1) (Hylobates lar (Lar gibbon)).